The primary structure comprises 37 residues: MKVQPSVKQICDKCKVIRRNGRVMVICENPRHKQRQG.

This sequence belongs to the bacterial ribosomal protein bL36 family.

In Kocuria rhizophila (strain ATCC 9341 / DSM 348 / NBRC 103217 / DC2201), this protein is Large ribosomal subunit protein bL36A.